Consider the following 287-residue polypeptide: MINLRQQIPHYLRLMRFDKPVGIFLLLWPTLWAVWIAAKGAPSFKIAVIFIAGSVVMRAAGCIVNDFADRHLDKHVQRTQMRPLASGSVSVTEAMLLFAVLSLIAFTLVLLLNRLTVELAVIGILLALVYPFLKRFTHLPQLWLGIAFSWSIPMAFAATVGHVPAVAWLLFFAAVLWPIVYDTQYAMIDREDDVKVGIKSTAILFGRYDRLMIGLLQGSVLLTFGLLGWYLRFNYWFYLGLLVALGLMCYQQFLIRHRKPPDCFAAFRNNNWVGFFIFLGILLTYRN.

9 helical membrane-spanning segments follow: residues valine 21–alanine 41, phenylalanine 44–valine 64, valine 91–leucine 111, leucine 112–phenylalanine 132, leucine 139–threonine 159, valine 160–valine 180, leucine 211–leucine 231, tyrosine 235–isoleucine 255, and cysteine 263–leucine 283.

Belongs to the UbiA prenyltransferase family. It depends on Mg(2+) as a cofactor.

It is found in the cell inner membrane. It carries out the reaction all-trans-octaprenyl diphosphate + 4-hydroxybenzoate = 4-hydroxy-3-(all-trans-octaprenyl)benzoate + diphosphate. Its pathway is cofactor biosynthesis; ubiquinone biosynthesis. In terms of biological role, catalyzes the prenylation of para-hydroxybenzoate (PHB) with an all-trans polyprenyl group. Mediates the second step in the final reaction sequence of ubiquinone-8 (UQ-8) biosynthesis, which is the condensation of the polyisoprenoid side chain with PHB, generating the first membrane-bound Q intermediate 3-octaprenyl-4-hydroxybenzoate. This Coxiella burnetii (strain CbuK_Q154) (Coxiella burnetii (strain Q154)) protein is 4-hydroxybenzoate octaprenyltransferase.